A 1365-amino-acid polypeptide reads, in one-letter code: MSENEVVGSPTTNGDKNEDGYPAENGEGTNVDDNNNEEEKDGIPLDNDNDENDSSEESATDEEAERQVREGFIVEDEEDEVPQEIRRKKKRKKHAESTADQDMLDEEDLELVMENTGQGSRFSKLRRLKRGRDQEETLENIFSEEEEEEENEVDDEAPNRTQGHRAGVIDEFADFIEQDEFEDEERQEEKYETGPPIESVRPEALGISDDDYIQIYEVFGDGTDYAFALEDEDAEDELEESVSLKTIFEPSELKDKMLTEEDEIIRITDEPERMQLYMKRNIDCSEDEFREQVAWIIDYLLKNRRDIDAELYEPFQTAVRYVVHFFIRDSLEVPFIWQHRRDYIVHNNRERNTITPLLSQNDLWNIFFLCTKFWSLHSKKQDILKLYSDLGINDDLVVPFCEAASSLDAIDDLNDYIHFTYSEQIRDRALLMGTGLRRPQGSKYSFFEKFRKSSLYNLVKEFGMSAKDFSFNVAQGARLRFVEDNTLSPEELSRTYVTNELSSPEQVLQKARRVLAEEIIHDPQFRKSFRDKLYNAGVVTVLATQKGVRKIGSEHPYYEFKYLKRKPLGSFELEPILFLKMLKAEEEGLIQLSIEFEDPDDVFKGLLELFVSDNFSENAMQWNAQRELVLKEVFKRFSALAPDAIRETLRSRYLDELGMRCRNQLFSRLDQAPYEPSTKNFDRGTIPSVLAVSNGKGESSDAIICVFVDDVGEPTDSLKLADLRDLANQAMFAEFVEKVKPDVIGVSGMSVSAHKIRQHVQDSLTSHEPVDLIMVNDEVARLYQNSTRAVDEFPTLPTISCYCVALARYVQNPLFEYAAMGRDLMSLSFDPWQHLLPPDVLWKYLETALVDISSLVGIDINEAVTNKYEANILPYIAGLGPRKADYVLKKIAATGGRIDNRSDLISKQIMSRKVFINCSSFFIIPNDEYPNMDILDSTRIHNEDYELARKMASDALELDEEDIEELETNRGVVYHLLEENETGKLDELVLEEYADQLEREFHQKKRNTLEKIRLELKDPYGEQRNVFHKLTPSEIFLMLTGENPEELQADAIVPVNVRRVTNRFVAVKLDCGIDGNIKADEVSDDFIPPPQLLQVGQTVEGVIISLDEANFMVDLSLRNSVLQSANSKRQTSSHRTSYWDTEAEKRDTERMQAETQAEQRVARVIKHPLFKDLNASQAEAYLSKMQVGDLVIRPSSKGSDHIVVTWKVAEGSYQHIDVLELEKENEFTIGQKLLVKGRFEKMTYQYSDLDELIVLHIKAIAKKIDEMCIHDKFRKGTQAETEKWLESYSEANPKRSCYAFCFDHQHPGYFILCFKASVNSPVTAWPVKVIPNAFFLQGNVYGDMTALCNGFKLLYAARTKNFRRM.

A compositionally biased stretch (polar residues) spans 1–14; that stretch reads MSENEVVGSPTTNG. Disordered stretches follow at residues 1–165 and 181–202; these read MSEN…QGHR and FEDEERQEEKYETGPPIESVRP. Residues 24–33 are compositionally biased toward low complexity; the sequence is ENGEGTNVDD. 4 stretches are compositionally biased toward acidic residues: residues 47-64, 73-82, 102-111, and 136-156; these read NDNDENDSSEESATDEEA, IVEDEEDEVP, DMLDEEDLEL, and ETLENIFSEEEEEEENEVDDE. Position 137 is a phosphothreonine (Thr-137). Position 143 is a phosphoserine (Ser-143). Ser-454 bears the Phosphoserine mark. One can recognise an S1 motif domain in the interval 1050 to 1118; the sequence is DAIVPVNVRR…ANFMVDLSLR (69 aa). A compositionally biased stretch (polar residues) spans 1124 to 1139; the sequence is SANSKRQTSSHRTSYW. The interval 1124–1146 is disordered; sequence SANSKRQTSSHRTSYWDTEAEKR. Positions 1167–1262 constitute an SH2 domain; that stretch reads HPLFKDLNAS…IVLHIKAIAK (96 aa).

Belongs to the SPT6 family.

Its subcellular location is the nucleus. The protein resides in the chromosome. Functionally, histone H3-H4 chaperone that plays a role in maintenance of chromatin structure during RNA polymerase II transcription elongation thereby repressing transcription initiation from cryptic promoters. Mediates the reassembly of nucleosomes onto the promoters of at least a selected set of genes during repression; the nucleosome reassembly is essential for transcriptional repression. This is Transcription elongation factor spt6 (spt6) from Schizosaccharomyces pombe (strain 972 / ATCC 24843) (Fission yeast).